The primary structure comprises 1094 residues: Probable arabinosyltransferase C (1094 aa).

Helical transmembrane passes span 28 to 50 (IARY…TPLL), 232 to 251 (AAMI…LHIL), 264 to 286 (PARW…WWHF), 341 to 360 (SIWM…WVIS), 373 to 392 (TSRA…WLPL), 431 to 453 (IGAL…LVAI), 466 to 488 (RFGV…IPIF), 530 to 552 (SIAR…AMSL), 565 to 582 (SRRI…MMFT), 586 to 608 (WTHH…AVAV), 620 to 642 (TVFA…GWWY), 657 to 679 (WRWS…AAWF), and 700 to 722 (LAGI…EVVS). Residues 817–831 (GSEPGTEGGTTAAPG) are compositionally biased toward low complexity. The segment at 817–836 (GSEPGTEGGTTAAPGINGSR) is disordered.

This sequence belongs to the emb family.

The protein resides in the cell membrane. Its function is as follows. Arabinosyl transferase responsible for the polymerization of arabinose into the arabinan of arabinogalactan. The sequence is that of Probable arabinosyltransferase C (embC) from Mycobacterium bovis (strain ATCC BAA-935 / AF2122/97).